Here is a 160-residue protein sequence, read N- to C-terminus: Transcription elongation factor GreA 2 (160 aa).

The stretch at Met-9–Gln-73 forms a coiled coil.

It belongs to the GreA/GreB family.

Its function is as follows. Necessary for efficient RNA polymerase transcription elongation past template-encoded arresting sites. The arresting sites in DNA have the property of trapping a certain fraction of elongating RNA polymerases that pass through, resulting in locked ternary complexes. Cleavage of the nascent transcript by cleavage factors such as GreA or GreB allows the resumption of elongation from the new 3'terminus. GreA releases sequences of 2 to 3 nucleotides. In Lactiplantibacillus plantarum (strain ATCC BAA-793 / NCIMB 8826 / WCFS1) (Lactobacillus plantarum), this protein is Transcription elongation factor GreA 2.